The primary structure comprises 253 residues: Imidazole glycerol phosphate synthase subunit HisF (253 aa).

Residues Asp11 and Asp130 contribute to the active site.

Belongs to the HisA/HisF family. Heterodimer of HisH and HisF.

It localises to the cytoplasm. It catalyses the reaction 5-[(5-phospho-1-deoxy-D-ribulos-1-ylimino)methylamino]-1-(5-phospho-beta-D-ribosyl)imidazole-4-carboxamide + L-glutamine = D-erythro-1-(imidazol-4-yl)glycerol 3-phosphate + 5-amino-1-(5-phospho-beta-D-ribosyl)imidazole-4-carboxamide + L-glutamate + H(+). It participates in amino-acid biosynthesis; L-histidine biosynthesis; L-histidine from 5-phospho-alpha-D-ribose 1-diphosphate: step 5/9. Functionally, IGPS catalyzes the conversion of PRFAR and glutamine to IGP, AICAR and glutamate. The HisF subunit catalyzes the cyclization activity that produces IGP and AICAR from PRFAR using the ammonia provided by the HisH subunit. The sequence is that of Imidazole glycerol phosphate synthase subunit HisF from Geobacter metallireducens (strain ATCC 53774 / DSM 7210 / GS-15).